Reading from the N-terminus, the 381-residue chain is Beta-lactamase CMY-4 (381 aa).

An N-terminal signal peptide occupies residues 1–20 (MMKKSLCCALLLTASFSTFA). Ser84 serves as the catalytic Acyl-ester intermediate. Positions 84, 140, 170, and 172 each coordinate a beta-lactam.

The protein belongs to the class-C beta-lactamase family.

It catalyses the reaction a beta-lactam + H2O = a substituted beta-amino acid. Class C beta-lactamase which confers resistance to penicillins and cephalosporins. In Klebsiella pneumoniae, this protein is Beta-lactamase CMY-4.